A 665-amino-acid polypeptide reads, in one-letter code: MKKPFYITTPIYYPSGKLHIGSAYTTIACDVLARYKRLMGHEVFYLTGLDEHGQKIQTKAKEAGITPQTYVDNMAKDVKALWQLLDISYDTFIRTTDDYHEEVVAAVFEKLLAQDDIYLGEYSGWYSVSDEEFFTESQLKEVFRDEDGQVIGGIAPSGHEVEWVSEESYFLRLSKYDDRLVAFFKERPDFIQPDGRMNEMVKNFIEPGLEDLAVSRTTFTWGVPVPSDPKHVVYVWIDALLNYATALGYRQANHANFDKFWNGTVFHMVGKDILRFHSIYWPILLMMLDLPMPDRLIAHGWFVMKDGKMSKSKGNVVYPEMLVERFGLDPLRYYLMRSLPVGSDGTFTPEDYVGRINYELANDLGNLLNRTVAMINKYFDGTVPAYVDNGTAFDADLSQLIDAQLADYHKHMEAVDYPRALEAVWTIIARTNKYIDETAPWVLAKEDGDKAQLASVMAHLAASLRLVAHVIQPFMMETSAAIMAQLGLEPVSDLSTLALADFPANTKVVAKGTPIFPRLDMEAEIDYIKAQMGDSSAISQEKEWVPEEVALKSEKDVITFETFDAVEIRVAEVKEVSKVEGSEKLLRFRVDAGDGQDRQILSGIAKFYPNEQELVGKKLQIVANLKPRKMMKKYISQGMILSAEHGDQLTVLTVDSSVPNGSIIG.

A 'HIGH' region motif is present at residues 12–22 (YYPSGKLHIGS). Residues 308 to 312 (KMSKS) carry the 'KMSKS' region motif. An ATP-binding site is contributed by Lys311. Residues 562–665 (TFDAVEIRVA…SSVPNGSIIG (104 aa)) enclose the tRNA-binding domain.

The protein belongs to the class-I aminoacyl-tRNA synthetase family. MetG type 2B subfamily. In terms of assembly, homodimer.

The protein localises to the cytoplasm. It catalyses the reaction tRNA(Met) + L-methionine + ATP = L-methionyl-tRNA(Met) + AMP + diphosphate. Is required not only for elongation of protein synthesis but also for the initiation of all mRNA translation through initiator tRNA(fMet) aminoacylation. In Streptococcus pyogenes serotype M1, this protein is Methionine--tRNA ligase (metG).